A 350-amino-acid polypeptide reads, in one-letter code: Probable 2-dehydropantoate 2-reductase (350 aa).

NADP(+) is bound by residues 9–14 (GAGSIG) and asparagine 115. Residue asparagine 115 participates in substrate binding. Residue lysine 213 is the Proton donor of the active site. Positions 217, 221, and 295 each coordinate substrate. Glutamate 307 provides a ligand contact to NADP(+).

The protein belongs to the ketopantoate reductase family.

It catalyses the reaction (R)-pantoate + NADP(+) = 2-dehydropantoate + NADPH + H(+). It participates in cofactor biosynthesis; (R)-pantothenate biosynthesis; (R)-pantoate from 3-methyl-2-oxobutanoate: step 2/2. Its function is as follows. Catalyzes the NADPH-dependent reduction of ketopantoate into pantoic acid. The sequence is that of Probable 2-dehydropantoate 2-reductase from Schizosaccharomyces pombe (strain 972 / ATCC 24843) (Fission yeast).